Reading from the N-terminus, the 344-residue chain is Heat-inducible transcription repressor HrcA (344 aa).

Belongs to the HrcA family.

Functionally, negative regulator of class I heat shock genes (grpE-dnaK-dnaJ and groELS operons). Prevents heat-shock induction of these operons. The chain is Heat-inducible transcription repressor HrcA from Streptococcus agalactiae serotype III (strain NEM316).